Here is a 73-residue protein sequence, read N- to C-terminus: Translational regulator CsrA (73 aa).

It belongs to the CsrA/RsmA family. As to quaternary structure, homodimer; the beta-strands of each monomer intercalate to form a hydrophobic core, while the alpha-helices form wings that extend away from the core.

The protein localises to the cytoplasm. Functionally, a translational regulator that binds mRNA to regulate translation initiation and/or mRNA stability. Usually binds in the 5'-UTR at or near the Shine-Dalgarno sequence preventing ribosome-binding, thus repressing translation. Its main target seems to be the major flagellin gene, while its function is anatagonized by FliW. This Clostridium kluyveri (strain NBRC 12016) protein is Translational regulator CsrA.